Consider the following 542-residue polypeptide: LysM domain-containing protein ARB_00327 (542 aa).

A signal peptide spans 1-35 (MLSSVLFPAMRTLLLLKYVFSLISLSAICCQTVSA). Residues Asn218, Asn298, Asn381, and Asn415 are each glycosylated (N-linked (GlcNAc...) asparagine). Positions 264–310 (RWYGVKKGDYCNLIVLKFGITMDNFIFLNPALNSNCTNLYAEESYCV) constitute a LysM 1 domain. The segment at 439–484 (DSDEPTPTTPITTSDDPTSTSATPTTPTTSSKPSPGAPTMTGQPSA) is disordered. Over residues 443 to 472 (PTPTTPITTSDDPTSTSATPTTPTTSSKPS) the composition is skewed to low complexity. The 48-residue stretch at 487–534 (KWHTVTNGESCTVIPKTFGITLEQFLAWNPTVKSDCTENFWAGYAYCV) folds into the LysM 2 domain.

Its subcellular location is the secreted. Might have a role in sequestration of chitin oligosaccharides (breakdown products of fungal cell walls that are released during invasion and act as triggers of host immunity) to dampen host defense. The chain is LysM domain-containing protein ARB_00327 from Arthroderma benhamiae (strain ATCC MYA-4681 / CBS 112371) (Trichophyton mentagrophytes).